Here is a 62-residue protein sequence, read N- to C-terminus: Large ribosomal subunit protein bL28 (62 aa).

It belongs to the bacterial ribosomal protein bL28 family.

The polypeptide is Large ribosomal subunit protein bL28 (Bacillus velezensis (strain DSM 23117 / BGSC 10A6 / LMG 26770 / FZB42) (Bacillus amyloliquefaciens subsp. plantarum)).